Consider the following 363-residue polypeptide: Proline/serine-rich coiled-coil protein 1 (363 aa).

Ser22 bears the Phosphoserine mark. Repeat 1 spans residues 38–41 (PEKP). The tract at residues 39 to 67 (EKPLRRGLSHRSDPNAVAPAPQGVRLSLG) is disordered. Residue Leu42 is modified to Phosphoserine. Residue Gly45 is modified to Phosphothreonine. Ser47, Ser65, Ser70, Ser98, Ser122, and Ser140 each carry phosphoserine. Repeat 2 spans residues 68 to 71 (PLSP). Residues 70-94 (SPEKLEEILDEANRLAAQLEQCALQ) are a coiled coil. The disordered stretch occupies residues 95 to 363 (DRESAGEGLG…RKVAVPGPTR (269 aa)). A 4 X 4 AA repeats of P-X-X-P region spans residues 103 to 246 (LGPRRVKPSP…HPSPPGPPTP (144 aa)). The span at 112–124 (PRRETFVLKDSPV) shows a compositional bias: basic and acidic residues. Over residues 133–148 (SLTRSTPSPSSLTPRL) the composition is skewed to low complexity. A Phosphothreonine modification is found at Thr145. Phosphoserine is present on residues Ser186 and Ser190. Residues 186-196 (SPASSPLTRST) are compositionally biased toward polar residues. Over residues 197-210 (PPVRGRAGPSGRAA) the composition is skewed to low complexity. A Phosphoserine modification is found at Ser212. The residue at position 215 (Thr215) is a Phosphothreonine. 2 consecutive repeat copies span residues 238–241 (PSPP) and 243–246 (PPTP).

It belongs to the PSRC1 family. As to quaternary structure, interacts with APC2. Interacts with KIF2A. Interacts with ANKRD53; recruits ANKRD53 to the spindle during mitosis. In terms of processing, phosphorylated during mitosis. As to expression, widely expressed in adult and fetal tissues, with highest expression in the adult brain and fetal thymus. Not detected in adult skeletal muscle.

The protein resides in the cytoplasm. Its subcellular location is the cytoskeleton. It localises to the spindle. It is found in the spindle pole. Required for normal progression through mitosis. Required for normal congress of chromosomes at the metaphase plate, and for normal rate of chromosomal segregation during anaphase. Plays a role in the regulation of mitotic spindle dynamics. Increases the rate of turnover of microtubules on metaphase spindles, and contributes to the generation of normal tension across sister kinetochores. Recruits KIF2A and ANKRD53 to the mitotic spindle and spindle poles. May participate in p53/TP53-regulated growth suppression. In Homo sapiens (Human), this protein is Proline/serine-rich coiled-coil protein 1 (PSRC1).